A 286-amino-acid polypeptide reads, in one-letter code: Bifunctional protein FolD (286 aa).

NADP(+) is bound by residues 165–167 (GRS), Ser190, and Val231.

The protein belongs to the tetrahydrofolate dehydrogenase/cyclohydrolase family. As to quaternary structure, homodimer.

The enzyme catalyses (6R)-5,10-methylene-5,6,7,8-tetrahydrofolate + NADP(+) = (6R)-5,10-methenyltetrahydrofolate + NADPH. The catalysed reaction is (6R)-5,10-methenyltetrahydrofolate + H2O = (6R)-10-formyltetrahydrofolate + H(+). It functions in the pathway one-carbon metabolism; tetrahydrofolate interconversion. In terms of biological role, catalyzes the oxidation of 5,10-methylenetetrahydrofolate to 5,10-methenyltetrahydrofolate and then the hydrolysis of 5,10-methenyltetrahydrofolate to 10-formyltetrahydrofolate. In Bacillus cereus (strain ATCC 10987 / NRS 248), this protein is Bifunctional protein FolD.